The chain runs to 445 residues: 6-phosphogluconate dehydrogenase, decarboxylating (445 aa).

Residues 1–4, 22–24, 63–65, and N91 contribute to the NADP(+) site; these read AVMG, NRS, and VKA. Residues N91 and 117 to 119 contribute to the substrate site; that span reads SGG. K172 (proton acceptor) is an active-site residue. Substrate is bound at residue 175 to 176; sequence HN. The Proton donor role is filled by E179. Substrate-binding residues include Y180, K249, R276, R434, and H440.

The protein belongs to the 6-phosphogluconate dehydrogenase family. In terms of assembly, homodimer.

The catalysed reaction is 6-phospho-D-gluconate + NADP(+) = D-ribulose 5-phosphate + CO2 + NADPH. Its pathway is carbohydrate degradation; pentose phosphate pathway; D-ribulose 5-phosphate from D-glucose 6-phosphate (oxidative stage): step 3/3. In terms of biological role, catalyzes the oxidative decarboxylation of 6-phosphogluconate to ribulose 5-phosphate and CO(2), with concomitant reduction of NADP to NADPH. The protein is 6-phosphogluconate dehydrogenase, decarboxylating (gnd) of Citrobacter freundii.